We begin with the raw amino-acid sequence, 247 residues long: ATP synthase subunit a, chloroplastic (247 aa).

5 helical membrane-spanning segments follow: residues 38–58 (QVLITSWVVIAILLGSASIAV), 95–115 (VPFIGTMFLFIFVSNWSGALL), 134–154 (INTTVALALLTSVAYFYAGLS), 199–219 (LVVVVLVSLVPSVVPIPVMFL), and 220–240 (GLFTSGIQALIFATLAAAYIG).

Belongs to the ATPase A chain family. F-type ATPases have 2 components, CF(1) - the catalytic core - and CF(0) - the membrane proton channel. CF(1) has five subunits: alpha(3), beta(3), gamma(1), delta(1), epsilon(1). CF(0) has four main subunits: a, b, b' and c.

The protein localises to the plastid. Its subcellular location is the chloroplast thylakoid membrane. Functionally, key component of the proton channel; it plays a direct role in the translocation of protons across the membrane. The chain is ATP synthase subunit a, chloroplastic from Oenothera argillicola (Appalachian evening primrose).